Consider the following 1936-residue polypeptide: Probable inactive serine/threonine-protein kinase DDB_G0278909 (1936 aa).

5 LRR repeats span residues 61–82 (LLEK…GHLN), 83–103 (KLKR…QGLS), 104–125 (SLVY…SDCK), 126–147 (KLIN…DHFS), and 151–173 (SLKV…QKKI). The LRRCT domain maps to 191–230 (NLIEKKYEEFRLFVINELPKLKYLNWVLISKDERTKASKL). 2 stretches are compositionally biased toward low complexity: residues 253–285 (NNPN…SSNN) and 293–302 (TTTSVSVGSS). Disordered stretches follow at residues 253–319 (NNPN…STSF) and 347–386 (KERE…IDET). A compositionally biased stretch (polar residues) spans 310 to 319 (SSPNSRSTSF). HEAT repeat units follow at residues 325 to 368 (SVGA…SSSS) and 439 to 476 (QETE…DLLY). Over residues 353-373 (QSTSPSSSSLSISSSSQNNNS) the composition is skewed to low complexity. Residues 516-526 (LSSSSSSSSTT) are compositionally biased toward low complexity. Disordered regions lie at residues 516–544 (LSSS…QLDL), 599–620 (NSTL…SPKL), 660–689 (IDQN…INNN), 702–756 (QSIL…PIMK), and 769–809 (QDQP…HFKS). Residues 527 to 538 (PPQPQLPPPPPQ) are compositionally biased toward pro residues. 2 HEAT repeats span residues 574–614 (PVVS…TTPP) and 617–654 (SPKL…GSAK). The segment covering 600-612 (STLSTTPPLSSTT) has biased composition (low complexity). The span at 660–673 (IDQNTATTPSTPSK) shows a compositional bias: polar residues. Residues 736-756 (STTTNTTPTSTPGSPSKPIMK) show a composition bias toward low complexity. The segment covering 774-785 (IVSPPQPQPQPP) has biased composition (pro residues). The segment covering 786–805 (IVQQKQQQQQQQQQQQQPQQ) has biased composition (low complexity). In terms of domain architecture, Protein kinase spans 961–1241 (IQVGSRLGLG…ISKILSQPFQ (281 aa)). Residues 967-975 (LGLGSFGDC) and Lys988 each bind ATP. Disordered stretches follow at residues 1050–1075 (SHNN…NNNN) and 1261–1308 (NTTI…VKHQ). Low complexity-rich tracts occupy residues 1052–1075 (NNNN…NNNN), 1266–1282 (SSSS…VGSV), and 1291–1302 (NNSNTGSTGSTS). 9 HEAT repeats span residues 1317–1356 (RKMI…ALKA), 1512–1549 (FIEE…NQNC), 1553–1590 (LHNA…DIEF), 1598–1635 (NCLS…SICS), 1690–1728 (QSRL…LFSS), 1739–1775 (SMSV…VNNK), 1780–1817 (IHMM…SQEC), 1821–1858 (FLQK…DDSA), and 1863–1900 (RDNQ…KQIN).

This Dictyostelium discoideum (Social amoeba) protein is Probable inactive serine/threonine-protein kinase DDB_G0278909.